A 327-amino-acid polypeptide reads, in one-letter code: Quinone oxidoreductase 1 (327 aa).

NADP(+)-binding positions include F42–Y46, Y130, G152–V153, G173–K177, Y192, S216, F238–S241, P264–L266, and R317.

Belongs to the zinc-containing alcohol dehydrogenase family. Quinone oxidoreductase subfamily. Homodimer.

It carries out the reaction 2 a quinone + NADPH + H(+) = 2 a 1,4-benzosemiquinone + NADP(+). This Escherichia coli (strain K12) protein is Quinone oxidoreductase 1 (qorA).